Here is a 280-residue protein sequence, read N- to C-terminus: Orotidine 5'-phosphate decarboxylase (280 aa).

Residues Asp-40, 62 to 64 (KTH), 93 to 102 (DRKFVDIGNT), Tyr-228, and Arg-246 each bind substrate. The active-site Proton donor is Lys-95.

This sequence belongs to the OMP decarboxylase family.

It catalyses the reaction orotidine 5'-phosphate + H(+) = UMP + CO2. The protein operates within pyrimidine metabolism; UMP biosynthesis via de novo pathway; UMP from orotate: step 2/2. This Solorina crocea protein is Orotidine 5'-phosphate decarboxylase (PYRG).